The sequence spans 827 residues: Periplasmic nitrate reductase (827 aa).

A signal peptide (tat-type signal) is located at residues 1–34 (MSLTRRDFIKANAVPATAAAAGLATPAIAQPAKA). Positions 36 to 92 (IRWDKGVCRFCGTGCSVLVGVQDGRVVATQGDPDSPVNRGLNCIKGYFLSKIMYGED) constitute a 4Fe-4S Mo/W bis-MGD-type domain. [4Fe-4S] cluster is bound by residues Cys43, Cys46, Cys50, and Cys78. Residues Lys80, Gln148, Asn173, Cys177, 210–217 (WGSNMAEM), 241–245 (STFEH), 260–262 (QTD), Met371, Gln375, Asn481, 507–508 (SD), Lys530, Asp557, and 717–726 (TGRVLEHWHS) each bind Mo-bis(molybdopterin guanine dinucleotide). Residue Phe793 coordinates substrate. Positions 801 and 818 each coordinate Mo-bis(molybdopterin guanine dinucleotide).

This sequence belongs to the prokaryotic molybdopterin-containing oxidoreductase family. NasA/NapA/NarB subfamily. Component of the periplasmic nitrate reductase NapAB complex composed of NapA and NapB. It depends on [4Fe-4S] cluster as a cofactor. Mo-bis(molybdopterin guanine dinucleotide) is required as a cofactor. Post-translationally, predicted to be exported by the Tat system. The position of the signal peptide cleavage has not been experimentally proven.

It localises to the periplasm. The catalysed reaction is 2 Fe(II)-[cytochrome] + nitrate + 2 H(+) = 2 Fe(III)-[cytochrome] + nitrite + H2O. Its function is as follows. Catalytic subunit of the periplasmic nitrate reductase complex NapAB. Receives electrons from NapB and catalyzes the reduction of nitrate to nitrite. This is Periplasmic nitrate reductase from Paramagnetospirillum magnetotacticum (Aquaspirillum magnetotacticum).